Consider the following 805-residue polypeptide: Phenylalanine--tRNA ligase beta subunit (805 aa).

Residues 39–154 (SEGLKKVVVG…DDATPGDPVF (116 aa)) form the tRNA-binding domain. Residues 410–485 (VQPTTVTIDL…RLYGYDNLPA (76 aa)) form the B5 domain. The Mg(2+) site is built by Asp-463, Asp-469, Glu-472, and Glu-473. Residues 712 to 805 (SKFPSITRDV…LTDELGAEIR (94 aa)) form the FDX-ACB domain.

The protein belongs to the phenylalanyl-tRNA synthetase beta subunit family. Type 1 subfamily. In terms of assembly, tetramer of two alpha and two beta subunits. Requires Mg(2+) as cofactor.

The protein resides in the cytoplasm. It carries out the reaction tRNA(Phe) + L-phenylalanine + ATP = L-phenylalanyl-tRNA(Phe) + AMP + diphosphate + H(+). This is Phenylalanine--tRNA ligase beta subunit from Lactiplantibacillus plantarum (strain ATCC BAA-793 / NCIMB 8826 / WCFS1) (Lactobacillus plantarum).